A 261-amino-acid chain; its full sequence is MRLAFVGLGKMGRSILKGALERGFLRPEEVGVLGRTPERSRELAEPFGVRPLTRADLGMAERVLIAVQPRDFPALAPEIAHHRLGYISIMAGISTSVLARRLDNRRVVRAMPNLAVVIGESSTALTALKEAREAEDLAFARALFATVGDVYEIPEHLFDAFTGMSASAPAYLAVVAEALADAGVKMGMPRALALRLAADALAATGELLKGRHPAQVKDEVASPGGTTIHGLHALEARAVRAAFYEAVEAATRRGHELGESE.

It belongs to the pyrroline-5-carboxylate reductase family.

It is found in the cytoplasm. It catalyses the reaction L-proline + NADP(+) = (S)-1-pyrroline-5-carboxylate + NADPH + 2 H(+). The catalysed reaction is L-proline + NAD(+) = (S)-1-pyrroline-5-carboxylate + NADH + 2 H(+). Its pathway is amino-acid biosynthesis; L-proline biosynthesis; L-proline from L-glutamate 5-semialdehyde: step 1/1. Catalyzes the reduction of 1-pyrroline-5-carboxylate (PCA) to L-proline. In Thermus thermophilus (strain ATCC BAA-163 / DSM 7039 / HB27), this protein is Pyrroline-5-carboxylate reductase.